Reading from the N-terminus, the 447-residue chain is Asparagine--tRNA ligase (447 aa).

Belongs to the class-II aminoacyl-tRNA synthetase family. In terms of assembly, homodimer.

The protein localises to the cytoplasm. It catalyses the reaction tRNA(Asn) + L-asparagine + ATP = L-asparaginyl-tRNA(Asn) + AMP + diphosphate + H(+). This Streptococcus pneumoniae serotype 4 (strain ATCC BAA-334 / TIGR4) protein is Asparagine--tRNA ligase.